We begin with the raw amino-acid sequence, 291 residues long: Regulator of rDNA transcription protein 5 (291 aa).

The 84-residue stretch at 21-104 folds into the RRM 1 domain; it reads KRIYISNLDF…RTLKIKMYVP (84 aa). Residues 109 to 151 form a disordered region; that stretch reads ARAERRKEKRKVPAPQAEENPDAAPQDAQQPQPPAPAEEPTSK. Residues 152 to 235 enclose the RRM 2 domain; sequence DTVYCAYLPS…KKITLRPARL (84 aa). The interval 271 to 291 is disordered; that stretch reads HRQQEAEIPAAETPDDVAATA.

The protein belongs to the RRT5 family.

Its function is as follows. May be involved in the modulation of rDNA transcription. This Lachancea thermotolerans (strain ATCC 56472 / CBS 6340 / NRRL Y-8284) (Yeast) protein is Regulator of rDNA transcription protein 5 (RRT5).